The chain runs to 66 residues: MAFLKKSLFLVLFLGLVSLSICEEEKRETEEKENEQEDDDKSEEKRFLSLIPHAINAVSAIAKHFG.

Positions M1 to C22 are cleaved as a signal peptide. A propeptide spanning residues E23–E44 is cleaved from the precursor. The tract at residues E24–K45 is disordered. The span at E31–K41 shows a compositional bias: acidic residues. Phenylalanine amide is present on F65.

Expressed by the skin glands.

Its subcellular location is the secreted. Has antibacterial activity against the Gram-negative bacteria E.coli ATCC 11775 (MIC=7.2 uM), and the Gram-positive bacteria S.aureus ATCC 12600 (MIC=3.6 uM) and M.luteus ATCC 49732 (MIC=1.8 uM). Does not inhibit the growth of the fungus C.albicans. This is Phylloseptin-Az2 from Pithecopus azureus (Orange-legged monkey tree frog).